The sequence spans 494 residues: Glutamate--tRNA ligase (494 aa).

Residues 9–19 (PSPTGPLHIGS) carry the 'HIGH' region motif. Positions 249–253 (KLSKR) match the 'KMSKS' region motif. Position 252 (K252) interacts with ATP.

Belongs to the class-I aminoacyl-tRNA synthetase family. Glutamate--tRNA ligase type 1 subfamily. As to quaternary structure, monomer.

It is found in the cytoplasm. The catalysed reaction is tRNA(Glu) + L-glutamate + ATP = L-glutamyl-tRNA(Glu) + AMP + diphosphate. Catalyzes the attachment of glutamate to tRNA(Glu) in a two-step reaction: glutamate is first activated by ATP to form Glu-AMP and then transferred to the acceptor end of tRNA(Glu). The sequence is that of Glutamate--tRNA ligase from Azobacteroides pseudotrichonymphae genomovar. CFP2.